We begin with the raw amino-acid sequence, 120 residues long: uncharacterized protein (120 aa).

A helical transmembrane segment spans residues 47–63 (VSIVIGLCTVLISAGAG).

Its subcellular location is the membrane. This is an uncharacterized protein from Sinorhizobium fredii (strain NBRC 101917 / NGR234).